Consider the following 648-residue polypeptide: DNA ligase (648 aa).

NAD(+) is bound by residues 30-34 (DEEYD) and 79-80 (SQ). Lysine 110 serves as the catalytic N6-AMP-lysine intermediate. The NAD(+) site is built by arginine 131, glutamate 165, lysine 280, and lysine 304. The Zn(2+) site is built by cysteine 398, cysteine 401, cysteine 414, and cysteine 419. Residues 573 to 648 (VSENPFKNKT…LTEEEMNSLF (76 aa)) form the BRCT domain.

It belongs to the NAD-dependent DNA ligase family. LigA subfamily. It depends on Mg(2+) as a cofactor. Mn(2+) serves as cofactor.

The enzyme catalyses NAD(+) + (deoxyribonucleotide)n-3'-hydroxyl + 5'-phospho-(deoxyribonucleotide)m = (deoxyribonucleotide)n+m + AMP + beta-nicotinamide D-nucleotide.. Functionally, DNA ligase that catalyzes the formation of phosphodiester linkages between 5'-phosphoryl and 3'-hydroxyl groups in double-stranded DNA using NAD as a coenzyme and as the energy source for the reaction. It is essential for DNA replication and repair of damaged DNA. The protein is DNA ligase of Aliarcobacter butzleri (strain RM4018) (Arcobacter butzleri).